A 164-amino-acid chain; its full sequence is Cyclin-dependent kinase inhibitor 1 (164 aa).

Position 2 is an N-acetylserine (serine 2). Serine 2 participates in a covalent cross-link: Glycyl serine ester (Ser-Gly) (interchain with G-Cter in ubiquitin). The C4-type zinc finger occupies 13–41; it reads CGSKACRRLFGPVDSEQLSRDCDALMAGC. Residues 17 to 24 form a required for binding cyclins region; that stretch reads ACRRLFGP. The tract at residues 53 to 58 is required for binding CDKs; it reads FVTETP. The interval 76–164 is disordered; it reads LYLPTGPRRG…RRLIFSKRKP (89 aa). At threonine 80 the chain carries Phosphothreonine; by LKB1. Serine 114 carries the phosphoserine; by GSK3-beta modification. Phosphoserine is present on serine 130. Positions 140 to 164 match the PIP-box K+4 motif motif; the sequence is RKRRQTSMTDFYHSKRRLIFSKRKP. Positions 141–156 match the Nuclear localization signal motif; sequence KRRQTSMTDFYHSKRR. The residue at position 145 (threonine 145) is a Phosphothreonine; by PKA, PKB/AKT1, PIM1 and PIM2. Phosphoserine; by PKC and NUAK1 is present on serine 146. The segment at 152 to 164 is interaction with TRIM39; the sequence is HSKRRLIFSKRKP. Residues 153–164 are compositionally biased toward basic residues; it reads SKRRLIFSKRKP. Serine 160 is subject to Phosphoserine; by PKC; in vitro.

This sequence belongs to the CDI family. As to quaternary structure, interacts with HDAC1; the interaction is prevented by competitive binding of C10orf90/FATS to HDAC1 facilitating acetylation and protein stabilization of CDKN1A/p21. Interacts with MKRN1. Interacts with PSMA3. Interacts with PCNA. Component of the ternary complex, cyclin D-CDK4-CDKN1A. Interacts (via its N-terminal domain) with CDK4; the interaction promotes the assembly of the cyclin D-CDK4 complex, its nuclear translocation and promotes the cyclin D-dependent enzyme activity of CDK4. Binding to CDK2 leads to CDK2/cyclin E inactivation at the G1-S phase DNA damage checkpoint, thereby arresting cells at the G1-S transition during DNA repair. Interacts with PIM1. Interacts with STK11 and NUAK1. Interacts wih DTL. Interacts with isoform 1 and isoform 2 of TRIM39. Interacts with PKP3; the interaction sequesters CDKN1A to the cytoplasm thereby repressing its role as an inhibitor of CDK4- and CDK6-driven RB1 phosphorylation. In terms of processing, phosphorylation of Thr-145 by Akt or of Ser-146 by PKC impairs binding to PCNA. Phosphorylation at Ser-114 by GSK3-beta enhances ubiquitination by the DCX(DTL) complex. Phosphorylation of Thr-145 by PIM2 enhances CDKN1A stability and inhibits cell proliferation. Phosphorylation of Thr-145 by PIM1 results in the relocation of CDKN1A to the cytoplasm and enhanced CDKN1A protein stability. UV radiation-induced phosphorylation at Thr-80 by LKB1 and at Ser-146 by NUAK1 leads to its degradation. Post-translationally, ubiquitinated by MKRN1; leading to polyubiquitination and 26S proteasome-dependent degradation. Ubiquitinated by the DCX(DTL) complex, also named CRL4(CDT2) complex, leading to its degradation during S phase or following UV irradiation. Ubiquitination by the DCX(DTL) complex is essential to control replication licensing and is PCNA-dependent: interacts with PCNA via its PIP-box, while the presence of the containing the 'K+4' motif in the PIP box, recruit the DCX(DTL) complex, leading to its degradation. Ubiquitination at Ser-2 leads to degradation by the proteasome pathway. Ubiquitinated by RNF114; leading to proteasomal degradation. Acetylation leads to protein stability. Acetylated in vitro on Lys-141, Lys-154, Lys-161 and Lys-163. Deacetylation by HDAC1 is prevented by competitive binding of C10orf90/FATS to HDAC1. As to expression, expressed in all adult tissues, with 5-fold lower levels observed in the brain.

It is found in the cytoplasm. Its subcellular location is the nucleus. In terms of biological role, plays an important role in controlling cell cycle progression and DNA damage-induced G2 arrest. Involved in p53/TP53 mediated inhibition of cellular proliferation in response to DNA damage. Also involved in p53-independent DNA damage-induced G2 arrest mediated by CREB3L1 in astrocytes and osteoblasts. Binds to and inhibits cyclin-dependent kinase activity, preventing phosphorylation of critical cyclin-dependent kinase substrates and blocking cell cycle progression. Functions in the nuclear localization and assembly of cyclin D-CDK4 complex and promotes its kinase activity towards RB1. At higher stoichiometric ratios, inhibits the kinase activity of the cyclin D-CDK4 complex. Inhibits DNA synthesis by DNA polymerase delta by competing with POLD3 for PCNA binding. Negatively regulates the CDK4- and CDK6-driven phosphorylation of RB1 in keratinocytes, thereby resulting in the release of E2F1 and subsequent transcription of E2F1-driven G1/S phase promoting genes. In Homo sapiens (Human), this protein is Cyclin-dependent kinase inhibitor 1.